Reading from the N-terminus, the 118-residue chain is Large ribosomal subunit protein bL20 (118 aa).

This sequence belongs to the bacterial ribosomal protein bL20 family.

Its function is as follows. Binds directly to 23S ribosomal RNA and is necessary for the in vitro assembly process of the 50S ribosomal subunit. It is not involved in the protein synthesizing functions of that subunit. This Psychromonas ingrahamii (strain DSM 17664 / CCUG 51855 / 37) protein is Large ribosomal subunit protein bL20.